The primary structure comprises 519 residues: Acetylcholine receptor subunit gamma (519 aa).

The first 22 residues, 1–22, serve as a signal peptide directing secretion; the sequence is MCGGQRPLFLLPLLAVCLGAKG. Over 23 to 240 the chain is Extracellular; that stretch reads RNQEERLLGD…VVFYLLIQRK (218 aa). N-linked (GlcNAc...) asparagine glycosylation is found at Asn52 and Asn163. A disulfide bridge links Cys150 with Cys164. 3 helical membrane-spanning segments follow: residues 241–265, 274–292, and 308–329; these read PLFY…IYFL, CTVA…FLVA, and YLTF…VLNV. Residues 330–476 are Cytoplasmic-facing; it reads SLRSPHTHSM…WFLVGRVLDR (147 aa). A helical transmembrane segment spans residues 477-497; the sequence is VCFLAMLSLFVCGTAGIFLMA.

The protein belongs to the ligand-gated ion channel (TC 1.A.9) family. Acetylcholine receptor (TC 1.A.9.1) subfamily. Gamma/CHRNG sub-subfamily. In terms of assembly, pentamer of two alpha chains, and one each of the beta, delta, and gamma (in immature muscle) or epsilon (in mature muscle) chains.

Its subcellular location is the postsynaptic cell membrane. The protein resides in the cell membrane. It catalyses the reaction K(+)(in) = K(+)(out). The catalysed reaction is Na(+)(in) = Na(+)(out). Functionally, after binding acetylcholine, the AChR responds by an extensive change in conformation that affects all subunits and leads to opening of an ion-conducting channel across the plasma membrane. This Bos taurus (Bovine) protein is Acetylcholine receptor subunit gamma (CHRNG).